The primary structure comprises 203 residues: Somatotropin (203 aa).

Residues 1–17 form the signal peptide; the sequence is MNRVILLLSVMCVGVSS. A Pyrrolidone carboxylic acid modification is found at Gln18. 2 cysteine pairs are disulfide-bonded: Cys68–Cys176 and Cys193–Cys201.

The protein belongs to the somatotropin/prolactin family.

It is found in the secreted. Growth hormone plays an important role in growth control and is involved in the regulation of several anabolic processes. Implicated as an osmoregulatory substance important for seawater adaptation. The chain is Somatotropin (gh) from Verasper variegatus (Spotted flounder).